Reading from the N-terminus, the 285-residue chain is Putative sugar uptake protein lp_2503 (285 aa).

The next 9 membrane-spanning stretches (helical) occupy residues 2 to 21, 31 to 48, 55 to 72, 112 to 134, 147 to 169, 179 to 196, 209 to 228, 233 to 255, and 264 to 283; these read GILI…LISG, TLGM…LWAV, SKIW…SIGQ, GNMY…LTSL, NWGV…TIVV, VVMP…IWSF, NIVT…MAMA, AVAY…YLLG, and VYVV…LSLM.

It belongs to the GRP transporter (TC 2.A.7.5) family.

It localises to the cell membrane. The protein is Putative sugar uptake protein lp_2503 of Lactiplantibacillus plantarum (strain ATCC BAA-793 / NCIMB 8826 / WCFS1) (Lactobacillus plantarum).